Here is a 213-residue protein sequence, read N- to C-terminus: Kynurenine formamidase (213 aa).

W18 provides a ligand contact to substrate. The Zn(2+) site is built by H48, H52, and D54. Catalysis depends on H58, which acts as the Proton donor/acceptor. Positions 160 and 172 each coordinate Zn(2+).

This sequence belongs to the Cyclase 1 superfamily. KynB family. As to quaternary structure, homodimer. It depends on Zn(2+) as a cofactor.

It catalyses the reaction N-formyl-L-kynurenine + H2O = L-kynurenine + formate + H(+). Its pathway is amino-acid degradation; L-tryptophan degradation via kynurenine pathway; L-kynurenine from L-tryptophan: step 2/2. Its function is as follows. Catalyzes the hydrolysis of N-formyl-L-kynurenine to L-kynurenine, the second step in the kynurenine pathway of tryptophan degradation. The sequence is that of Kynurenine formamidase from Burkholderia cenocepacia (strain HI2424).